The following is a 170-amino-acid chain: Probable inactive uracil-DNA glycosylase, mitochondrial (170 aa).

A mitochondrion-targeting transit peptide spans 1–53 (MALSTPKTLMDFFQPAKRLKASPSSSSSFPAVSVAGRSRDLGSVANSPPRVTV).

The protein belongs to the uracil-DNA glycosylase (UDG) superfamily. UNG family.

It localises to the mitochondrion. In terms of biological role, probable inactive paralog of AtUNG (AC Q9LIH6) generated by a gene duplication event and subsequently disrupted by at least two transposon insertions. The chain is Probable inactive uracil-DNA glycosylase, mitochondrial from Arabidopsis thaliana (Mouse-ear cress).